Consider the following 87-residue polypeptide: MANIKSAKKRAIQSEKRRQHNASRRSMTRTYLKKVIAAIASGDKAAAVAAFATAQPIMDRMATKGLIHKNKAARHKSRLSAQIKAMA.

Residues 1 to 27 (MANIKSAKKRAIQSEKRRQHNASRRSM) are disordered.

This sequence belongs to the bacterial ribosomal protein bS20 family.

Binds directly to 16S ribosomal RNA. This is Small ribosomal subunit protein bS20 from Aeromonas salmonicida (strain A449).